The following is a 230-amino-acid chain: Urease accessory protein UreF (230 aa).

The protein belongs to the UreF family. In terms of assembly, ureD, UreF and UreG form a complex that acts as a GTP-hydrolysis-dependent molecular chaperone, activating the urease apoprotein by helping to assemble the nickel containing metallocenter of UreC. The UreE protein probably delivers the nickel.

The protein localises to the cytoplasm. In terms of biological role, required for maturation of urease via the functional incorporation of the urease nickel metallocenter. In Polynucleobacter asymbioticus (strain DSM 18221 / CIP 109841 / QLW-P1DMWA-1) (Polynucleobacter necessarius subsp. asymbioticus), this protein is Urease accessory protein UreF.